The sequence spans 436 residues: MSESRKLFIKTYGCQMNVYDSERMAEALGAKGYVLTEVAEEADMVLLNTCHIREKAAEKVYSDLGRLRPLKVARPDLKIGVAGCVAQAEGEEILRRMPLVDLVVGPQSYHRLPDMLERTEGGARVIDTDFPEEDKFEHLPERKALRGPTAFLTVQEGCDKFCAFCVVPYTRGAEVSRPFARLMAEARALVEKGVREITLLGQNVNAWSNDGRGLGGLIRELARIDGLERLRYTTSHPNDMADDLIEAHGQEPKLMPYLHLPVQSGSDRILKAMNRKHAAEQYLRLVERIRAARPDILLTSDFIVGFPGETDADFEATLALIRAVGFGSAFSFKYSARPGTPAAEKPELPAELCDARLQTLQALLGEQQRAAQAAMVGRELGVLYEKAGRLPGQMVGKSDYLHAVHVEDPGARPGDLVRVRITASGPNSLAGERIGV.

The MTTase N-terminal domain maps to 5–121 (RKLFIKTYGC…LPDMLERTEG (117 aa)). Residues cysteine 14, cysteine 50, cysteine 84, cysteine 158, cysteine 162, and cysteine 165 each coordinate [4Fe-4S] cluster. Residues 144 to 373 (ALRGPTAFLT…LGEQQRAAQA (230 aa)) form the Radical SAM core domain. In terms of domain architecture, TRAM spans 373-435 (AAMVGRELGV…PNSLAGERIG (63 aa)).

This sequence belongs to the methylthiotransferase family. MiaB subfamily. In terms of assembly, monomer. [4Fe-4S] cluster serves as cofactor.

It is found in the cytoplasm. It carries out the reaction N(6)-dimethylallyladenosine(37) in tRNA + (sulfur carrier)-SH + AH2 + 2 S-adenosyl-L-methionine = 2-methylsulfanyl-N(6)-dimethylallyladenosine(37) in tRNA + (sulfur carrier)-H + 5'-deoxyadenosine + L-methionine + A + S-adenosyl-L-homocysteine + 2 H(+). Its function is as follows. Catalyzes the methylthiolation of N6-(dimethylallyl)adenosine (i(6)A), leading to the formation of 2-methylthio-N6-(dimethylallyl)adenosine (ms(2)i(6)A) at position 37 in tRNAs that read codons beginning with uridine. The protein is tRNA-2-methylthio-N(6)-dimethylallyladenosine synthase of Cereibacter sphaeroides (strain ATCC 17025 / ATH 2.4.3) (Rhodobacter sphaeroides).